Consider the following 206-residue polypeptide: MKTILAVIFFGILAFAFADYPSIENCTHPPAMANFNQKKFLEGKWYVTKAKHGSNSTVCREYRAKTKGNDQILVGDGYYSFNGGTFYFTVRCKRLPNKEVQKPLQFTCTQKSTDDPSKMFKFQLEVTILDTDYANYAVMYRCVQFPEQLGSHFEDNTLLLHRNPDQLVDENQVERKLNLSFDSFRSREDVVDGCPKLPSKKKNKAS.

A signal peptide spans 1–18; that stretch reads MKTILAVIFFGILAFAFA. 3 N-linked (GlcNAc...) asparagine glycosylation sites follow: Asn-25, Asn-55, and Asn-178.

The protein belongs to the calycin superfamily. Triabin family. In terms of assembly, interacts with host coagulation factor XII (F12) (inactive and activated) (via amino acids 1-77). Interacts with host high molecular weight kininogen (KNG1) (via amino acids 402-532). Salivary gland (at protein level).

Its subcellular location is the secreted. Zn(2+) modulates binding to host coagulation factor XII (F12) and high molecular weight kininogen (KNG1). In terms of biological role, suppresses activation of the host plasma kallikrein-kinin system, leading to inhibition of the intrinsic coagulation pathway. Blocks host coagulation factor XII (F12) and prekallikrein (KLKB1) reciprocal activation without affecting their amidolytic activities. Blocks binding of host F12 and high molecular weight kininogen (KNG1) to negatively charged surfaces. Attenuates generation of bradykinin by interfering with activation of host kallikrein-kinin system. This Triatoma infestans (Assassin bug) protein is Triafestin-2.